We begin with the raw amino-acid sequence, 365 residues long: Phosphatidylcholine:ceramide cholinephosphotransferase 2 (365 aa).

A compositionally biased stretch (basic and acidic residues) spans 1–14 (MDIIETAKLEEHLE). The segment at 1–52 (MDIIETAKLEEHLENQPSDPTNTYARPAEPVEEENKNGNGKPKSLSSGLRKG) is disordered. Over residues 15-24 (NQPSDPTNTY) the composition is skewed to polar residues. A run of 4 helical transmembrane segments spans residues 80-100 (GIAF…ITVV), 128-148 (FSVS…QWLF), 159-179 (FCFI…VTTL), and 206-226 (LISG…DFLF). His-229 is a catalytic residue. A helical membrane pass occupies residues 248 to 268 (FWWYHLICWLLSAAGIICILV). Residues His-272 and Asp-276 contribute to the active site. The chain crosses the membrane as a helical span at residues 275–295 (IDVIIAYYITTRLFWWYHSMA). The Cytoplasmic segment spans residues 296–365 (NEKNLKVSSQ…KIGEDNEKST (70 aa)). Residues Cys-331, Cys-332, Cys-343, and Cys-348 are each lipidated (S-palmitoyl cysteine).

Belongs to the sphingomyelin synthase family. Post-translationally, palmitoylated on Cys-331, Cys-332, Cys-343 and Cys-348; which plays an important role in plasma membrane localization. Brain, heart, kidney, liver, muscle and stomach. Also expressed in a number of cell lines such as carcinoma HeLa cells, hepatoma Hep-G2 cells, and colon carcinoma Caco-2 cells.

The protein localises to the cell membrane. It localises to the golgi apparatus membrane. It catalyses the reaction an N-acylsphing-4-enine + a 1,2-diacyl-sn-glycero-3-phosphocholine = a sphingomyelin + a 1,2-diacyl-sn-glycerol. The enzyme catalyses an N-acylsphinganine + a 1,2-diacyl-sn-glycero-3-phosphocholine = an N-acylsphinganine-1-phosphocholine + a 1,2-diacyl-sn-glycerol. It carries out the reaction an N-acyl-(4R)-4-hydroxysphinganine + a 1,2-diacyl-sn-glycero-3-phosphocholine = an N-acyl-(4R)-4-hydroxysphinganine-phosphocholine + a 1,2-diacyl-sn-glycerol. The catalysed reaction is an N-acylsphinganine + a 1,2-diacyl-sn-glycero-3-phosphoethanolamine = an N-acylsphinganine-1-phosphoethanolamine + a 1,2-diacyl-sn-glycerol. It catalyses the reaction an N-acyl-(4R)-4-hydroxysphinganine + a 1,2-diacyl-sn-glycero-3-phosphoethanolamine = an N-acyl-(4R)-4-hydroxysphinganine-1-phosphoethanolamine + a 1,2-diacyl-sn-glycerol. The enzyme catalyses an N-acylsphing-4-enine + a 1,2-diacyl-sn-glycero-3-phosphoethanolamine = an N-acylsphing-4-enine 1-phosphoethanolamine + a 1,2-diacyl-sn-glycerol. It carries out the reaction 1,2-dihexadecanoyl-sn-glycero-3-phosphocholine + an N-acylsphing-4-enine = 1,2-dihexadecanoyl-sn-glycerol + a sphingomyelin. The catalysed reaction is 1-(9Z-octadecenoyl)-2-acyl-sn-3-glycerol + a sphingomyelin = a 1-(9Z-octadecenoyl)-2-acyl-sn-glycero-3-phosphocholine + an N-acylsphing-4-enine. It catalyses the reaction N-hexadecanoylsphinganine + a 1,2-diacyl-sn-glycero-3-phosphocholine = N-hexadecanoyl-sphinganine-1-phosphocholine + a 1,2-diacyl-sn-glycerol. The enzyme catalyses N-hexadecanoyl-(4R)-hydroxysphinganine + a 1,2-diacyl-sn-glycero-3-phosphocholine = N-hexadecanoyl-(4R)-hydroxysphinganine-phosphocholine + a 1,2-diacyl-sn-glycerol. It carries out the reaction N-hexadecanoylsphinganine + a 1,2-diacyl-sn-glycero-3-phosphoethanolamine = N-hexadecanoyl-sphinganine-1-phosphoethanolamine + a 1,2-diacyl-sn-glycerol. The catalysed reaction is N-hexadecanoyl-(4R)-hydroxysphinganine + a 1,2-diacyl-sn-glycero-3-phosphoethanolamine = N-hexadecanoyl-(4R)-hydroxysphinganine-1-phosphoethanolamine + a 1,2-diacyl-sn-glycerol. It participates in sphingolipid metabolism. With respect to regulation, inhibited by bacterial PC-phospholipase C inhibitor D609. Its function is as follows. Sphingomyelin synthase that primarily contributes to sphingomyelin synthesis and homeostasis at the plasma membrane. Catalyzes the reversible transfer of phosphocholine moiety in sphingomyelin biosynthesis: in the forward reaction transfers phosphocholine head group of phosphatidylcholine (PC) on to ceramide (CER) to form ceramide phosphocholine (sphingomyelin, SM) and diacylglycerol (DAG) as by-product, and in the reverse reaction transfers phosphocholine from SM to DAG to form PC and CER. The direction of the reaction appears to depend on the levels of CER and DAG in the plasma membrane. Does not use free phosphorylcholine or CDP-choline as donors. Can also transfer phosphoethanolamine head group of phosphatidylethanolamine (PE) on to ceramide (CER) to form ceramide phosphoethanolamine (CPE). Regulates receptor-mediated signal transduction via mitogenic DAG and proapoptotic CER, as well as via SM, a structural component of membrane rafts that serve as platforms for signal transduction and protein sorting. To a lesser extent, plays a role in secretory transport via regulation of DAG pool at the Golgi apparatus and its downstream effects on PRKD1. Required for normal bone matrix mineralization. The polypeptide is Phosphatidylcholine:ceramide cholinephosphotransferase 2 (Homo sapiens (Human)).